Reading from the N-terminus, the 240-residue chain is Keratinocyte-associated protein 3 (240 aa).

The next 4 helical transmembrane spans lie at 21–41, 63–83, 94–114, and 163–183; these read VGLALILVGHVNLLLGAVLHG, VISVGSGLLSVSVGLVALLAS, VLLALALVNLLLSVACSLGLL, and ALALWIPSLLMSAGEAALSGY.

It belongs to the TMEM54 family. Expressed in skin, pancreas and keratinocytes.

The protein localises to the membrane. In Homo sapiens (Human), this protein is Keratinocyte-associated protein 3 (KRTCAP3).